A 295-amino-acid polypeptide reads, in one-letter code: Elongation factor Ts (295 aa).

The segment at 79–82 (TDFV) is involved in Mg(2+) ion dislocation from EF-Tu.

Belongs to the EF-Ts family.

It localises to the cytoplasm. In terms of biological role, associates with the EF-Tu.GDP complex and induces the exchange of GDP to GTP. It remains bound to the aminoacyl-tRNA.EF-Tu.GTP complex up to the GTP hydrolysis stage on the ribosome. The polypeptide is Elongation factor Ts (Bacillus cytotoxicus (strain DSM 22905 / CIP 110041 / 391-98 / NVH 391-98)).